The following is a 155-amino-acid chain: Endoribonuclease YbeY (155 aa).

The Zn(2+) site is built by His-114, His-118, and His-124.

It belongs to the endoribonuclease YbeY family. Zn(2+) serves as cofactor.

It localises to the cytoplasm. Functionally, single strand-specific metallo-endoribonuclease involved in late-stage 70S ribosome quality control and in maturation of the 3' terminus of the 16S rRNA. In Buchnera aphidicola subsp. Acyrthosiphon pisum (strain APS) (Acyrthosiphon pisum symbiotic bacterium), this protein is Endoribonuclease YbeY.